A 223-amino-acid polypeptide reads, in one-letter code: MKKRLHLIIADSELELVPESIIDHPAIVNYAKRRKKKPEKIILDSTYHHAALRQLEDGERRGRPDIVHICLLNALDSILNKEDRLRVYVHTRNDEVIYVDPSTRLPRNYNRFIGLMESLFEKKVVPEDLQLLRLEKKTLAELINEISPDAVFIMHENGEFMIPKHFGKLLASFKKPVVIVGGFPHGDFRSKVEGVKISLYREPLMAWTIVNEVIVSYEWEVIK.

Residues Gly-181, Gly-186, and 199-204 (LYREPL) contribute to the S-adenosyl-L-methionine site.

It belongs to the class IV-like SAM-binding methyltransferase superfamily. RNA methyltransferase NEP1 family. Homodimer.

It catalyses the reaction a pseudouridine in rRNA + S-adenosyl-L-methionine = an N(1)-methylpseudouridine in rRNA + S-adenosyl-L-homocysteine + H(+). Methyltransferase involved in ribosomal biogenesis. Specifically catalyzes the N1-methylation of the pseudouridine corresponding to position 914 in M.jannaschii 16S rRNA. This chain is Ribosomal RNA small subunit methyltransferase Nep1, found in Pyrococcus furiosus (strain ATCC 43587 / DSM 3638 / JCM 8422 / Vc1).